The chain runs to 169 residues: CKLF-like MARVEL transmembrane domain-containing protein 2A (169 aa).

A run of 4 helical transmembrane segments spans residues 40–60 (FWLSGHAVFKLLSLGCMISAL), 69–89 (HPVLILLICMEAAICIFFIFL), 98–118 (IPFVFWPMADIFNSLFSCVFL), and 136–156 (YLTAMILMGAAAICSFIDMLL). An MARVEL domain is found at 40 to 162 (FWLSGHAVFK…DMLLQFQHFR (123 aa)).

This sequence belongs to the chemokine-like factor family.

It localises to the membrane. In Mus musculus (Mouse), this protein is CKLF-like MARVEL transmembrane domain-containing protein 2A (Cmtm2a).